The sequence spans 307 residues: Sesquiterpene synthase-like protein Agr10 (307 aa).

The disordered stretch occupies residues G287 to R307. Polar residues predominate over residues E296–R307.

Belongs to the terpene synthase family.

This is Sesquiterpene synthase-like protein Agr10 from Cyclocybe aegerita (Black poplar mushroom).